A 213-amino-acid polypeptide reads, in one-letter code: Tellurium resistance protein TerX (213 aa).

It belongs to the CAPAB/TerDEXZ family.

Its function is as follows. Not known; seems to contribute to the tellurium resistance (Ter) mechanism. Also involved in phage inhibition (Phi) and colicin resistance (PacB). The polypeptide is Tellurium resistance protein TerX (terX) (Serratia marcescens).